Reading from the N-terminus, the 477-residue chain is E3 ubiquitin-protein ligase TRIM17 (477 aa).

The RING-type zinc finger occupies 16–66; it reads CSICLDYFTDPVMTACGHNFCRECIQMSWEKGKVKKGKKKQKGSFPCPECR. The segment at 94-135 adopts a B box-type zinc-finger fold; the sequence is QKRDLCQAHQEPLKLFCQDDQSPICVVCREAQEHRMHRVLPL. The Zn(2+) site is built by cysteine 99, histidine 102, cysteine 121, and histidine 127. Residues 135–226 are a coiled coil; sequence LDEAAREYKL…KLQDSKASLD (92 aa). One can recognise a B30.2/SPRY domain in the interval 276-475; that stretch reads AIKTLCRVPG…MVISTVTMWV (200 aa).

The protein belongs to the TRIM/RBCC family. Interacts (via coiled coil) with TRIM44 (via coiled coil). Interacts with TRIM28; this interaction prevents TRIM28 activity on BCL2A1. Interacts with TRIM41; this interaction prevents TRIM41 activity on ZSCAN2. Interacts with BECN1. Interacts with NFATC3 and NFATC4; these interactions prevent NFATC3 and NFATC4 nuclear localization. Post-translationally, auto-ubiquitinated. Almost exclusively in the testis.

The protein localises to the cytoplasm. Its subcellular location is the lysosome. The catalysed reaction is S-ubiquitinyl-[E2 ubiquitin-conjugating enzyme]-L-cysteine + [acceptor protein]-L-lysine = [E2 ubiquitin-conjugating enzyme]-L-cysteine + N(6)-ubiquitinyl-[acceptor protein]-L-lysine.. It functions in the pathway protein modification; protein ubiquitination. Its function is as follows. E3 ubiquitin ligase that plays important roles in the regulation of neuronal apoptosis, selective autophagy or cell proliferation. Stimulates the degradation of kinetochore ZW10 interacting protein ZWINT in a proteasome-dependent manner, leading to negative regulation of cell proliferation. Inhibits autophagic degradation of diverse known targets while contributing to autophagy of midbodies. Autophagy-inhibitory activity involves MCL1, which TRIM17 assembles into complexes with the key autophagy regulator BECN1. Controls neuronal apoptosis by mediating ubiquitination and degradation of MCL1 to initiate neuronal death. In addition, regulates NFAT transcription factors NFATC3 and NFATC4 activities by preventing their nuclear localization, thus inhibiting their transcriptional activities. Decreases TRIM41-mediated degradation of ZSCAN2 thereby stimulating alpha-synuclein/SNCA transcription in neuronal cells. Prevents the E3 ubiquitin-ligase activity of TRIM28 and its interaction with anti-apoptotic BCL2A1, blocking TRIM28 from ubiquitinating BCL2A1. The protein is E3 ubiquitin-protein ligase TRIM17 (Trim17) of Mus musculus (Mouse).